Here is a 98-residue protein sequence, read N- to C-terminus: Co-chaperonin GroES (98 aa).

The protein belongs to the GroES chaperonin family. As to quaternary structure, heptamer of 7 subunits arranged in a ring. Interacts with the chaperonin GroEL.

The protein localises to the cytoplasm. Its function is as follows. Together with the chaperonin GroEL, plays an essential role in assisting protein folding. The GroEL-GroES system forms a nano-cage that allows encapsulation of the non-native substrate proteins and provides a physical environment optimized to promote and accelerate protein folding. GroES binds to the apical surface of the GroEL ring, thereby capping the opening of the GroEL channel. In Brucella abortus (strain S19), this protein is Co-chaperonin GroES.